Reading from the N-terminus, the 293-residue chain is NAD kinase (293 aa).

Asp-74 functions as the Proton acceptor in the catalytic mechanism. NAD(+) contacts are provided by residues 74–75, Arg-79, 148–149, Arg-176, Asp-178, 189–194, and Gln-248; these read DG, NE, and TAYALS.

Belongs to the NAD kinase family. A divalent metal cation is required as a cofactor.

The protein localises to the cytoplasm. The enzyme catalyses NAD(+) + ATP = ADP + NADP(+) + H(+). Involved in the regulation of the intracellular balance of NAD and NADP, and is a key enzyme in the biosynthesis of NADP. Catalyzes specifically the phosphorylation on 2'-hydroxyl of the adenosine moiety of NAD to yield NADP. The chain is NAD kinase from Blochmanniella floridana.